Here is a 457-residue protein sequence, read N- to C-terminus: Acetylcholine receptor subunit alpha-1-B (457 aa).

The N-terminal stretch at 1 to 20 is a signal peptide; it reads MDYTASCLIFLFIAAGTVFG. At 21–230 the chain is on the extracellular side; the sequence is TDHETRLIGD…ITYHFVLQRL (210 aa). Disulfide bonds link cysteine 148/cysteine 162 and cysteine 212/cysteine 213. Residue asparagine 161 is glycosylated (N-linked (GlcNAc...) asparagine). Transmembrane regions (helical) follow at residues 231–255, 263–281, and 297–316; these read PLYFIVNVIIPCLLFSFLTGLVFYL, MTLSISVLLSLTVFLLVIV, and YMLFTMVFVIASIIITVIVI. The Cytoplasmic portion of the chain corresponds to 317-428; sequence NTHHRSPSTH…WKFVAMVLDH (112 aa). A helical membrane pass occupies residues 429 to 447; sequence ILLAVFMTVCVIGTLAVFA.

This sequence belongs to the ligand-gated ion channel (TC 1.A.9) family. Acetylcholine receptor (TC 1.A.9.1) subfamily. Alpha-1/CHRNA1 sub-subfamily. One of the alpha chains that assemble within the acetylcholine receptor, a pentamer of two alpha chains, a beta, a delta, and a gamma or epsilon chains.

It localises to the postsynaptic cell membrane. The protein localises to the cell membrane. The enzyme catalyses K(+)(in) = K(+)(out). It carries out the reaction Na(+)(in) = Na(+)(out). Functionally, upon acetylcholine binding, the AChR responds by an extensive change in conformation that affects all subunits and leads to opening of an ion-conducting channel across the plasma membrane. The chain is Acetylcholine receptor subunit alpha-1-B (chrna1-b) from Xenopus laevis (African clawed frog).